A 542-amino-acid chain; its full sequence is Calcium/calmodulin-dependent protein kinase type II subunit beta (542 aa).

The Protein kinase domain occupies 14-272 (YQLYEDIGKG…AHEALKHPWV (259 aa)). Tyr17 bears the Phosphotyrosine mark. ATP-binding positions include 20 to 28 (IGKGAFSVV) and Lys43. The active-site Proton acceptor is Asp136. Residues 283-292 (HRQETVECLK) are autoinhibitory domain. Thr287 carries the post-translational modification Phosphothreonine; by autocatalysis. The calmodulin-binding stretch occupies residues 291-301 (LKKFNARRKLK). A phosphothreonine; by autocatalysis mark is found at Thr306 and Thr307. Residues 349 to 407 (ADGVKPQTNSTKNSAAATSPKGTLPPAALEPQTTVIHNPVDGIKESSDSTHTTIEDEDT) form a disordered region. The segment covering 354–369 (PQTNSTKNSAAATSPK) has biased composition (polar residues). Ser367, Ser394, and Ser397 each carry phosphoserine. Phosphothreonine occurs at positions 400 and 401.

It belongs to the protein kinase superfamily. CAMK Ser/Thr protein kinase family. CaMK subfamily. As to quaternary structure, CAMK2 is composed of 4 different chains: alpha (CAMK2A), beta (CAMK2B), gamma (CAMK2G), and delta (CAMK2D). The different isoforms assemble into homo- or heteromultimeric holoenzymes composed of 12 subunits with two hexameric rings stacked one on top of the other. Interacts with SYNGAP1, CAMK2N2 and MPDZ. Interacts with FOXO3. Interacts (when in a kinase inactive state not associated with calmodulin) with ARC; leading to target ARC to inactive synapses. Interacts with CAMK2N1; this interaction requires CAMK2B activation by Ca(2+). In terms of processing, autophosphorylation of Thr-287 following activation by Ca(2+)/calmodulin. Phosphorylation of Thr-287 locks the kinase into an activated state.

It localises to the cytoplasm. The protein localises to the cytoskeleton. It is found in the microtubule organizing center. Its subcellular location is the centrosome. The protein resides in the sarcoplasmic reticulum membrane. It localises to the synapse. It catalyses the reaction L-seryl-[protein] + ATP = O-phospho-L-seryl-[protein] + ADP + H(+). The enzyme catalyses L-threonyl-[protein] + ATP = O-phospho-L-threonyl-[protein] + ADP + H(+). Its activity is regulated as follows. Activated by Ca(2+)/calmodulin. Binding of calmodulin results in conformational change that relieves intrasteric autoinhibition and allows autophosphorylation of Thr-287 which turns the kinase in a constitutively active form and confers to the kinase a Ca(2+)-independent activity. Functionally, calcium/calmodulin-dependent protein kinase that functions autonomously after Ca(2+)/calmodulin-binding and autophosphorylation, and is involved in dendritic spine and synapse formation, neuronal plasticity and regulation of sarcoplasmic reticulum Ca(2+) transport in skeletal muscle. In neurons, plays an essential structural role in the reorganization of the actin cytoskeleton during plasticity by binding and bundling actin filaments in a kinase-independent manner. This structural function is required for correct targeting of CaMK2A, which acts downstream of NMDAR to promote dendritic spine and synapse formation and maintain synaptic plasticity which enables long-term potentiation (LTP) and hippocampus-dependent learning. In developing hippocampal neurons, promotes arborization of the dendritic tree and in mature neurons, promotes dendritic remodeling. Also regulates the migration of developing neurons. Participates in the modulation of skeletal muscle function in response to exercise. In slow-twitch muscles, is involved in regulation of sarcoplasmic reticulum (SR) Ca(2+) transport and in fast-twitch muscle participates in the control of Ca(2+) release from the SR through phosphorylation of triadin, a ryanodine receptor-coupling factor, and phospholamban (PLN/PLB), an endogenous inhibitor of SERCA2A/ATP2A2. In response to interferon-gamma (IFN-gamma) stimulation, catalyzes phosphorylation of STAT1, stimulating the JAK-STAT signaling pathway. Phosphorylates reticulophagy regulator RETREG1 at 'Ser-147' under endoplasmic reticulum stress conditions which enhances RETREG1 oligomerization and its membrane scission and reticulophagy activity. The polypeptide is Calcium/calmodulin-dependent protein kinase type II subunit beta (CAMK2B) (Bos taurus (Bovine)).